A 181-amino-acid chain; its full sequence is 6,7-dimethyl-8-ribityllumazine synthase (181 aa).

5-amino-6-(D-ribitylamino)uracil is bound by residues Tyr-30, 61 to 63, and 87 to 89; these read ALE and CII. 92–93 lines the (2S)-2-hydroxy-3-oxobutyl phosphate pocket; that stretch reads ET. The active-site Proton donor is His-95. Asn-120 is a binding site for 5-amino-6-(D-ribitylamino)uracil. (2S)-2-hydroxy-3-oxobutyl phosphate is bound at residue Arg-134.

It belongs to the DMRL synthase family.

The catalysed reaction is (2S)-2-hydroxy-3-oxobutyl phosphate + 5-amino-6-(D-ribitylamino)uracil = 6,7-dimethyl-8-(1-D-ribityl)lumazine + phosphate + 2 H2O + H(+). Its pathway is cofactor biosynthesis; riboflavin biosynthesis; riboflavin from 2-hydroxy-3-oxobutyl phosphate and 5-amino-6-(D-ribitylamino)uracil: step 1/2. Catalyzes the formation of 6,7-dimethyl-8-ribityllumazine by condensation of 5-amino-6-(D-ribitylamino)uracil with 3,4-dihydroxy-2-butanone 4-phosphate. This is the penultimate step in the biosynthesis of riboflavin. The chain is 6,7-dimethyl-8-ribityllumazine synthase from Beijerinckia indica subsp. indica (strain ATCC 9039 / DSM 1715 / NCIMB 8712).